Reading from the N-terminus, the 963-residue chain is Importin-13 (963 aa).

HEAT repeat units lie at residues 24-54, 56-88, 95-135, 142-179, 194-231, 236-268, 276-325, 330-372, 375-438, 440-476, 487-522, 524-558, 562-600, 603-648, 676-716, 720-754, 761-803, 815-845, 860-893, and 897-931; these read ENVE…QAQV, PQAW…KISR, TDQY…LSMM, AVAD…EFQT, LAVE…SWVQ, LQDC…NAIS, VNTL…ALLD, WQSF…DDIL, EAEK…YEML, AELL…FQSI, VVPG…WLAD, PVMI…CREC, LPPY…LLSA, VEEI…SNLF, PVVV…VKTL, FAPM…VHIF, FPPI…ALKR, VKAV…TELL, EDGR…FALN, and FSLL…QQIL. One can recognise an Importin N-terminal domain in the interval 45–111; the sequence is AQKWLMQAQV…KAQLFTQITR (67 aa).

This sequence belongs to the importin beta family. As to quaternary structure, interacts with UBC9, RAN, RBM8A, eIF-1A and PAX6.

The protein resides in the cytoplasm. Its subcellular location is the nucleus. Functions in nuclear protein import as nuclear transport receptor. Serves as receptor for nuclear localization signals (NLS) in cargo substrates. Is thought to mediate docking of the importin/substrate complex to the nuclear pore complex (NPC) through binding to nucleoporin and the complex is subsequently translocated through the pore by an energy requiring, Ran-dependent mechanism. At the nucleoplasmic side of the NPC, Ran binds to the importin, the importin/substrate complex dissociates and importin is re-exported from the nucleus to the cytoplasm where GTP hydrolysis releases Ran. The directionality of nuclear import is thought to be conferred by an asymmetric distribution of the GTP- and GDP-bound forms of Ran between the cytoplasm and nucleus. Mediates the nuclear import of UBC9, the RBM8A/MAGOH complex, PAX6 and probably other members of the paired homeobox family. Also mediates nuclear export of eIF-1A, and the cytoplasmic release of eIF-1A is triggered by the loading of import substrates onto IPO13. The chain is Importin-13 (Ipo13) from Mus musculus (Mouse).